The chain runs to 206 residues: Translation machinery-associated protein 22 (206 aa).

An SUI1 domain is found at 98-169; the sequence is VVIKREARTK…EVEKYIHSLL (72 aa). The disordered stretch occupies residues 184 to 206; sequence SQKKKKKPTDEANSNNNNNNNNK. Low complexity predominate over residues 196-206; the sequence is NSNNNNNNNNK.

This sequence belongs to the DENR family. Interacts with the 40S ribosomal subunit.

The protein localises to the cytoplasm. The polypeptide is Translation machinery-associated protein 22 (TMA22) (Vanderwaltozyma polyspora (strain ATCC 22028 / DSM 70294 / BCRC 21397 / CBS 2163 / NBRC 10782 / NRRL Y-8283 / UCD 57-17) (Kluyveromyces polysporus)).